The following is a 277-amino-acid chain: Probable endonuclease 4 (277 aa).

Residues His-70, His-108, Glu-143, Asp-176, His-179, His-210, Asp-223, His-225, and Glu-255 each contribute to the Zn(2+) site.

The protein belongs to the AP endonuclease 2 family. Zn(2+) serves as cofactor.

The enzyme catalyses Endonucleolytic cleavage to 5'-phosphooligonucleotide end-products.. Endonuclease IV plays a role in DNA repair. It cleaves phosphodiester bonds at apurinic or apyrimidinic (AP) sites, generating a 3'-hydroxyl group and a 5'-terminal sugar phosphate. The chain is Probable endonuclease 4 from Mycoplasmopsis synoviae (strain 53) (Mycoplasma synoviae).